Here is a 2260-residue protein sequence, read N- to C-terminus: Reducing polyketide synthase pksF (2260 aa).

The Ketosynthase family 3 (KS3) domain maps to 20–445 (VEPIAIVGFG…GTNAHVVLDD (426 aa)). Active-site for beta-ketoacyl synthase activity residues include C194, H329, and H368. The interval 598–933 (FVFTGQGAQW…ECAGKLHTIG (336 aa)) is malonyl-CoA:ACP transacylase (MAT) domain. S689 serves as the catalytic For malonyltransferase activity. Positions 984–1121 (HELLGSRTPD…GYVAIEYDDR (138 aa)) are N-terminal hotdog fold. The dehydratase (DH) domain stretch occupies residues 984–1281 (HELLGSRTPD…FRNKLFSITA (298 aa)). A PKS/mFAS DH domain is found at 984–1306 (HELLGSRTPD…TSTIGRNSPS (323 aa)). H1016 (proton acceptor; for dehydratase activity) is an active-site residue. The segment at 1150 to 1306 (RIAIDSADIY…TSTIGRNSPS (157 aa)) is C-terminal hotdog fold. D1216 serves as the catalytic Proton donor; for dehydratase activity. The tract at residues 1544–1859 (GILKTLHYEQ…DVDVVEKIVI (316 aa)) is enoylreductase (ER) domain. A ketoreductase (KR) domain region spans residues 1882–2104 (PDASYLIAGA…LRFCCDPDRV (223 aa)). The 78-residue stretch at 2174–2251 (QATDIVVEAI…LLAVKVAGKS (78 aa)) folds into the Carrier domain. At S2211 the chain carries O-(pantetheine 4'-phosphoryl)serine.

It depends on pantetheine 4'-phosphate as a cofactor.

Functionally, reducing polyketide synthase that catalyzes the formation of a C22 intermediate attached to the ACP. Release by intramolecular hydrolysis by the enolized delta-carbonyl would give the pyrone product aslanipyrone. Alternatively, KR-mediated reduction of the beta-carbonyl of the C22 intermediate would form a beta-hydroxy thioester intermediate, which could be a substrate for a further KS-mediated condensation of an additional C2 unit to form a C24 intermediate, which cyclizes by aldol condensation followed by decarboxylation to form aslaniol. Neither aslanipyrone, aslaniol, nor their derivatives have been detected in A.solani, probably due to a low abundance and/or extensive post-PKS modification. It is assumed that the branching point from C22 to C24 is the result of KR activity on the C22 intermediate anchored to the ACP. In Alternaria solani, this protein is Reducing polyketide synthase pksF.